The following is a 405-amino-acid chain: Probable glucan 1,3-beta-glucosidase A (405 aa).

Residues 1–26 (MFPRISQAAILAHSLLAVCTSAATLA) form the signal peptide. Glu-198 functions as the Proton donor in the catalytic mechanism. Disulfide bonds link Cys-278/Cys-403 and Cys-304/Cys-330. Glu-296 functions as the Nucleophile in the catalytic mechanism.

This sequence belongs to the glycosyl hydrolase 5 (cellulase A) family. As to quaternary structure, monomer. Mn(2+) serves as cofactor.

The protein resides in the secreted. It carries out the reaction Successive hydrolysis of beta-D-glucose units from the non-reducing ends of (1-&gt;3)-beta-D-glucans, releasing alpha-glucose.. Functionally, beta-glucanases participate in the metabolism of beta-glucan, the main structural component of the cell wall. It could also function biosynthetically as a transglycosylase. The polypeptide is Probable glucan 1,3-beta-glucosidase A (exgA) (Emericella nidulans (strain FGSC A4 / ATCC 38163 / CBS 112.46 / NRRL 194 / M139) (Aspergillus nidulans)).